The primary structure comprises 623 residues: Chaperone protein DnaK (623 aa).

Threonine 175 carries the post-translational modification Phosphothreonine; by autocatalysis. Residues 578-623 (ANPEGAPGAGFDPNNMGGANAGNASAGNDKKDDNVVDADFKVEDDK) form a disordered region. Positions 591-604 (NNMGGANAGNASAG) are enriched in low complexity. Residues 605–623 (NDKKDDNVVDADFKVEDDK) are compositionally biased toward basic and acidic residues.

Belongs to the heat shock protein 70 family.

Its function is as follows. Acts as a chaperone. The sequence is that of Chaperone protein DnaK from Clostridium botulinum (strain 657 / Type Ba4).